The primary structure comprises 1744 residues: DNA-directed RNA polymerase I subunit RPA1 (1744 aa).

Cys-56, Cys-69, and His-72 together coordinate Zn(2+). Asp-597, Asp-599, and Asp-601 together coordinate Mg(2+). The segment at 953–965 (PAEYTIHAMAGRD) is bridging helix. A disordered region spans residues 1333–1484 (VPREKESGDG…RDGTDWGGTS (152 aa)). 2 stretches are compositionally biased toward gly residues: residues 1341–1354 (DGSG…GGSG) and 1366–1376 (DDGGGPLGGTF). The segment covering 1464 to 1478 (RDAEDGGEMQDRDGT) has biased composition (basic and acidic residues).

Belongs to the RNA polymerase beta' chain family. As to quaternary structure, component of the RNA polymerase I (Pol I) complex consisting of at least 13 subunits. Post-translationally, phosphorylated.

The protein resides in the nucleus. It is found in the nucleolus. The catalysed reaction is RNA(n) + a ribonucleoside 5'-triphosphate = RNA(n+1) + diphosphate. Its function is as follows. DNA-dependent RNA polymerase catalyzes the transcription of DNA into RNA using the four ribonucleoside triphosphates as substrates. Largest and catalytic core component of RNA polymerase I which synthesizes ribosomal RNA precursors. Forms the polymerase active center together with the second largest subunit. A single stranded DNA template strand of the promoter is positioned within the central active site cleft of Pol I. A bridging helix emanates from RPA1 and crosses the cleft near the catalytic site and is thought to promote translocation of Pol I by acting as a ratchet that moves the RNA-DNA hybrid through the active site by switching from straight to bent conformations at each step of nucleotide addition. The chain is DNA-directed RNA polymerase I subunit RPA1 (TRP11) from Trypanosoma brucei brucei.